The following is a 688-amino-acid chain: Acyl-CoA synthetase short-chain family member B, mitochondrial (688 aa).

This sequence belongs to the ATP-dependent AMP-binding enzyme family.

The protein localises to the mitochondrion. The catalysed reaction is acetate + ATP + CoA = acetyl-CoA + AMP + diphosphate. Functionally, activates acetate so that it can be used for lipid synthesis or for energy generation. The chain is Acyl-CoA synthetase short-chain family member B, mitochondrial (aslB) from Dictyostelium discoideum (Social amoeba).